The following is a 416-amino-acid chain: 4-hydroxy-3-methylbut-2-en-1-yl diphosphate synthase (flavodoxin) (416 aa).

Residues Cys304, Cys307, Cys350, and Glu357 each coordinate [4Fe-4S] cluster.

This sequence belongs to the IspG family. It depends on [4Fe-4S] cluster as a cofactor.

It catalyses the reaction (2E)-4-hydroxy-3-methylbut-2-enyl diphosphate + oxidized [flavodoxin] + H2O + 2 H(+) = 2-C-methyl-D-erythritol 2,4-cyclic diphosphate + reduced [flavodoxin]. Its pathway is isoprenoid biosynthesis; isopentenyl diphosphate biosynthesis via DXP pathway; isopentenyl diphosphate from 1-deoxy-D-xylulose 5-phosphate: step 5/6. Its function is as follows. Converts 2C-methyl-D-erythritol 2,4-cyclodiphosphate (ME-2,4cPP) into 1-hydroxy-2-methyl-2-(E)-butenyl 4-diphosphate. This chain is 4-hydroxy-3-methylbut-2-en-1-yl diphosphate synthase (flavodoxin), found in Rhizobium leguminosarum bv. trifolii (strain WSM2304).